A 109-amino-acid chain; its full sequence is Cysteine-rich venom protein 7 (109 aa).

Positions 1–21 are cleaved as a signal peptide; that stretch reads MSKVFVIILVALMVAISIASA. 5 disulfides stabilise this stretch: Cys-30-Cys-47, Cys-37-Cys-52, Cys-46-Cys-58, Cys-70-Cys-90, and Cys-78-Cys-98.

In terms of tissue distribution, expressed by the venom gland.

The protein resides in the secreted. In Pimpla hypochondriaca (Parasitoid wasp), this protein is Cysteine-rich venom protein 7.